A 482-amino-acid chain; its full sequence is Beta-1,3-glucan-binding protein 2 (482 aa).

Residues 1-18 (MWIKSVCLFATIAGCLGQ) form the signal peptide. The CBM39 domain maps to 23–122 (YKVPDAKLEA…GEWTVTEFVN (100 aa)). The N-linked (GlcNAc...) asparagine glycan is linked to Asn-124. Residues 127 to 153 (VVDTSTAPPPVAPAVSEEDQSPGPQWR) are disordered. The GH16 domain occupies 128–482 (VDTSTAPPPV…KVDYVRVYAL (355 aa)). Asn-189 is a glycosylation site (N-linked (GlcNAc...) asparagine).

Monomer. In terms of processing, N-glycosylated. As to expression, cuticle and fat body.

Its subcellular location is the secreted. In terms of biological role, involved in the recognition of invading microorganisms. Binds specifically to beta-1,3-glucan and lipoteichoic acid and causes aggregation of invading microorganisms. Binding to beta-1,3-glucan activates the phenoloxidase cascade. The chain is Beta-1,3-glucan-binding protein 2 from Manduca sexta (Tobacco hawkmoth).